A 1302-amino-acid polypeptide reads, in one-letter code: MELYFGEYQHVQQEYGVHLRLASDDTQKSRSSQNSKAGSYGVSIRVQGIDGHPYIVLNNTERCLAGTSFSENGPPFPPPVINNLPLHSSNGSVPKENSEELQLPENPYAQPSPIRNLKQPLLHEGKNGVLDRKDGSVKPSHLLNFQRHPELLQPYDPEKNELNLQNHQPSESNWLKTLTEEGINNKKPWTCFPKPSNSQPTSPSLEDPAKSGVTAIRLCSSVVIEDPKKQTSVCVNVQSCTKERVGEEALFTSGRPLTAHSPHAHPETKKTRPDVLPFRRQDSAGPVLDGARSRRSSSSSTTPTSANSLYRFLLDDQECAIHADNVNRHENRRYIPFLPGTGRDIDTGSIPGVDQLIEKFDQKPGLQRRGRSGKRNRINTDDRKRSRSVDSAFPFGLQGNSEYLIEFSRNLGKSSEHLLRPSQVCPQRPLSQERRGKQSVGRTFAKLQGAAHGASCAHSRPPQPNIDGKVLETEGSQESTVIRAPSLGAQSKKEEEVKTATATLMLQNRATATSPDSGAKKISVKTFPSASNTQATPDLLKGQQELTQQTNEETAKQILYNYLKEGSTDNDDATKRKVNLVFEKIQTLKSRAAGSAQGNNQACNSTSEVKDLLEQKSKLTIEVAELQRQLQLEVKNQQNIKEERERMRANLEELRSQHNEKVEENSTLQQRLEESEGELRKNLEELFQVKMEREQHQTEIRDLQDQLSEMHDELDSAKRSEDREKGALIEELLQAKQDLQDLLIAKEEQEDLLRKRERELTALKGALKEEVSSHDQEMDKLKEQYDAELQALRESVEEATKNVEVLASRSNTSEQDQAGTEMRVKLLQEENEKLQGRSEELERRVAQLQRQIEDLKGDEAKAKETLKKYEGEIRQLEEALVHARKEEKEAVSARRALENELEAAQGNLSQTTQEQKQLSEKLKEESEQKEQLRRLKNEMENERWHLGKTIEKLQKEMADIVEASRTSTLELQNQLDEYKEKNRRELAEMQRQLKEKTLEAEKSRLTAMKMQDEMRLMEEELRDYQRAQDEALTKRQLLEQTLKDLEYELEAKSHLKDDRSRLVKQMEDKVSQLEMELEEERNNSDLLSERISRSREQMEQLRNELLQERAARQDLECDKISLERQNKDLKSRIIHLEGSYRSSKEGLVVQMEARIAELEDRLESEERDRANLQLSNRRLERKVKELVMQVDDEHLSLTDQKDQLSLRLKAMKRQVEEAEEEIDRLESSKKKLQRELEEQMDMNEHLQGQLNSMKKDLRLKKLPSKVLDDMDDDDDLSTDGGSLYEAPVSYTFSKDSTVASQI.

The head stretch occupies residues 1–554 (MELYFGEYQH…ELTQQTNEET (554 aa)). The ZIM motif lies at 37 to 51 (AGSYGVSIRVQGIDG). The segment at 75 to 104 (PFPPPVINNLPLHSSNGSVPKENSEELQLP) is disordered. A phosphoserine mark is found at serine 112 and serine 202. 3 disordered regions span residues 186–209 (KKPW…EDPA), 251–305 (FTSG…TPTS), and 364–392 (PGLQ…VDSA). Positions 195–204 (PSNSQPTSPS) are enriched in polar residues. The span at 264–282 (AHPETKKTRPDVLPFRRQD) shows a compositional bias: basic and acidic residues. 3 positions are modified to phosphoserine: serine 283, serine 297, and serine 298. Residues 296–305 (SSSSSTTPTS) show a composition bias toward low complexity. A compositionally biased stretch (basic residues) spans 366–377 (LQRRGRSGKRNR). A compositionally biased stretch (basic and acidic residues) spans 378–388 (INTDDRKRSRS). Phosphoserine is present on residues serine 388, serine 391, and serine 486. Positions 604–1258 (NSTSEVKDLL…QLNSMKKDLR (655 aa)) form a coiled coil. Over residues 655–664 (RSQHNEKVEE) the composition is skewed to basic and acidic residues. The disordered stretch occupies residues 655 to 675 (RSQHNEKVEENSTLQQRLEES). The residue at position 708 (serine 708) is a Phosphoserine. Disordered regions lie at residues 903–929 (AAQG…SEQK) and 1263–1287 (PSKV…YEAP). Basic and acidic residues predominate over residues 917 to 929 (QLSEKLKEESEQK). A tail region spans residues 1263-1302 (PSKVLDDMDDDDDLSTDGGSLYEAPVSYTFSKDSTVASQI).

This sequence belongs to the cingulin family. As to quaternary structure, homodimer or oligomer. Interacts with CD2AP and SH3BP1; probably part of a complex at cell junctions. Smooth muscle, spleen, testis, fetal brain, amygdala, corpus callosum, cerebellum, thalamus and subthalamic nucleus of adult brain.

Its subcellular location is the cell junction. It is found in the tight junction. Its function is as follows. May be involved in anchoring the apical junctional complex, especially tight junctions, to actin-based cytoskeletons. This Homo sapiens (Human) protein is Cingulin-like protein 1 (CGNL1).